We begin with the raw amino-acid sequence, 347 residues long: Uroporphyrinogen decarboxylase (347 aa).

Residues arginine 24–arginine 28, phenylalanine 42, aspartate 73, tyrosine 150, threonine 205, and histidine 320 contribute to the substrate site.

The protein belongs to the uroporphyrinogen decarboxylase family. Homodimer.

The protein resides in the cytoplasm. The catalysed reaction is uroporphyrinogen III + 4 H(+) = coproporphyrinogen III + 4 CO2. It functions in the pathway porphyrin-containing compound metabolism; protoporphyrin-IX biosynthesis; coproporphyrinogen-III from 5-aminolevulinate: step 4/4. Catalyzes the decarboxylation of four acetate groups of uroporphyrinogen-III to yield coproporphyrinogen-III. This is Uroporphyrinogen decarboxylase from Gloeobacter violaceus (strain ATCC 29082 / PCC 7421).